We begin with the raw amino-acid sequence, 237 residues long: DNA repair protein RecO (237 aa).

The protein belongs to the RecO family.

Involved in DNA repair and RecF pathway recombination. In Rickettsia felis (strain ATCC VR-1525 / URRWXCal2) (Rickettsia azadi), this protein is DNA repair protein RecO.